The primary structure comprises 147 residues: Small ribosomal subunit protein uS5 (147 aa).

The 64-residue stretch at 9-72 (FEEVVVNISR…DNAFKNITTV (64 aa)) folds into the S5 DRBM domain.

The protein belongs to the universal ribosomal protein uS5 family. As to quaternary structure, part of the 30S ribosomal subunit. Contacts proteins S4 and S8.

Functionally, with S4 and S12 plays an important role in translational accuracy. Located at the back of the 30S subunit body where it stabilizes the conformation of the head with respect to the body. This is Small ribosomal subunit protein uS5 from Nitratiruptor sp. (strain SB155-2).